We begin with the raw amino-acid sequence, 439 residues long: UPF0489 protein C5orf22 homolog (439 aa).

A disordered region spans residues 163 to 219; sequence TTKLENGQSGAKIPKAAQTQDDMQSKADTPCTSSSQPPDGSAASGNISETAKKKADD. The segment covering 179 to 211 has biased composition (polar residues); the sequence is AQTQDDMQSKADTPCTSSSQPPDGSAASGNISE.

It belongs to the UPF0489 family.

The chain is UPF0489 protein C5orf22 homolog from Danio rerio (Zebrafish).